Reading from the N-terminus, the 348-residue chain is MQEKEMFDLTIIGGGPAGLYSTFYAGMRDLKVKLVEYNKELGGKILFYPEKIIWDVGGMPPTTGRTLINQLVEQATTFNPTICLNEHIVRMVREPDNTYTLFNEQGKAHYTRAVMLASGHGIPVMQKLEIEGADRYEVSNLHYTVTQMDIFANKRVLISGGGNAAVDWANELANISKEVVVCHRRDEFGGHEKNVEQMKSVTKIHTPYQIKELHGVGSAIEAVTLAHCDTGEQRQIEVDAVIVNHGMKLDGCFLIEAGLALEEDGFLRVSACMETSQPGIFAAGDVTRHEGKLQLISGAFVEGATAVNGVKQFLDPKADKQAYVSSHNEKFKKKNEQLKQEKQAQLMN.

Residues Glu-36, Lys-44, Tyr-48, Ile-88, Pro-123, Asp-285, and Ser-326 each contribute to the FAD site. The tract at residues 329–348 is disordered; sequence EKFKKKNEQLKQEKQAQLMN.

Belongs to the ferredoxin--NADP reductase type 2 family. In terms of assembly, homodimer. Requires FAD as cofactor.

It catalyses the reaction 2 reduced [2Fe-2S]-[ferredoxin] + NADP(+) + H(+) = 2 oxidized [2Fe-2S]-[ferredoxin] + NADPH. In Shouchella clausii (strain KSM-K16) (Alkalihalobacillus clausii), this protein is Ferredoxin--NADP reductase 1.